The chain runs to 346 residues: Glucose-6-phosphatase 3 (346 aa).

Over 1 to 24 the chain is Lumenal; the sequence is MESTLGAGIVIAEALQNQLAWLEN. Residues 25 to 45 traverse the membrane as a helical segment; the sequence is VWLWITFLGDPKILFLFYFPA. The Cytoplasmic segment spans residues 46 to 54; it reads AYYASRRVG. The helical transmembrane segment at 55 to 75 threads the bilayer; it reads IAVLWISLITEWLNLIFKWFL. Residues 76-114 are Lumenal-facing; that stretch reads FGDRPFWWVHESGYYSQAPAQVHQFPSSCETGPGSPSGH. Residue R79 coordinates substrate. H114 functions as the Proton donor in the catalytic mechanism. The helical transmembrane segment at 115-135 threads the bilayer; it reads CMITGAALWPIMTALSSQVAT. Topologically, residues 136–146 are cytoplasmic; that stretch reads RARSRWVRVMP. Residues 147–164 traverse the membrane as a helical segment; it reads SLAYCTFLLAVGLSRIFI. Residue R161 participates in substrate binding. Residues 165–169 are Lumenal-facing; that stretch reads LAHFP. H167 acts as the Nucleophile in catalysis. A helical membrane pass occupies residues 170 to 186; it reads HQVLAGLITGAVLGWLM. The Cytoplasmic portion of the chain corresponds to 187 to 197; sequence TPRVPMERELS. A helical membrane pass occupies residues 198 to 218; sequence FYGLTALALMLGTSLIYWTLF. The Lumenal portion of the chain corresponds to 219–254; sequence TLGLDLSWSISLAFKWCERPEWIHVDSRPFASLSRD. A helical membrane pass occupies residues 255–273; sequence SGAALGLGIALHSPCYAQV. Residues 274–283 are Cytoplasmic-facing; the sequence is RRAQLGNGQK. A helical membrane pass occupies residues 284–304; it reads IACLVLAMGLLGPLDWLGHPP. Residues 305–307 lie on the Lumenal side of the membrane; that stretch reads QIS. Residues 308–328 traverse the membrane as a helical segment; the sequence is LFYIFNFLKYTLWPCLVLALV. At 329 to 346 the chain is on the cytoplasmic side; that stretch reads PWAVHMFSAQEAPPIHSS.

It belongs to the glucose-6-phosphatase family. Ubiquitously expressed. Highly expressed in skeletal muscle, at intermediate levels in heart, brain, placenta, kidney, colon, thymus, spleen and pancreas. Also detected in testis, prostate, ovary, liver, lung, small intestine and peripheral blood lymphocytes.

The protein localises to the endoplasmic reticulum membrane. It carries out the reaction D-glucose 6-phosphate + H2O = D-glucose + phosphate. Its pathway is carbohydrate biosynthesis; gluconeogenesis. With respect to regulation, inhibited by vanadate. Functionally, hydrolyzes glucose-6-phosphate to glucose in the endoplasmic reticulum. May form with the glucose-6-phosphate transporter (SLC37A4/G6PT) a ubiquitously expressed complex responsible for glucose production through glycogenolysis and gluconeogenesis. Probably required for normal neutrophil function. This is Glucose-6-phosphatase 3 (G6PC3) from Homo sapiens (Human).